A 267-amino-acid polypeptide reads, in one-letter code: Cell division control protein 11 (267 aa).

The Septin-type G domain maps to Gln-6 to Gly-263. Residues Gly-16–Ser-23 are G1 motif. GTP-binding positions include Gly-16 to Ser-23, Gly-66, Lys-146 to Glu-154, and Arg-212. The interval Asp-63 to Gly-66 is G3 motif. Positions Ser-145 to Asp-148 are G4 motif.

The protein belongs to the TRAFAC class TrmE-Era-EngA-EngB-Septin-like GTPase superfamily. Septin GTPase family. Component of the septin complex.

Septins are GTPases involved in cytokinesis. The septins localize to the site of cleavage and act as a structural scaffold that recruits different components involved in diverse processes at specific stages during the cell cycle. Septins are also involved in cell morphogenesis, chitin deposition, cell cycle regulation, cell compartmentalization and spore wall formation. The polypeptide is Cell division control protein 11 (CDC11) (Encephalitozoon cuniculi (strain GB-M1) (Microsporidian parasite)).